Here is a 182-residue protein sequence, read N- to C-terminus: UPF0397 protein BCE_2667 (182 aa).

Transmembrane regions (helical) follow at residues 9–29 (VVAIGIGAALYGILGLWGFSI), 40–60 (AILTIFGALFGPVAGLLIGLI), 71–91 (WGIWWGWVFSSGIIGFAMGLI), 114–134 (ITGLIGIVIAIIFAGAFDIIV), and 142–162 (IVIQVLGATIADVIVFLVLGL).

This sequence belongs to the UPF0397 family.

Its subcellular location is the cell membrane. This Bacillus cereus (strain ATCC 10987 / NRS 248) protein is UPF0397 protein BCE_2667.